A 121-amino-acid polypeptide reads, in one-letter code: VGVFLLSYSVPSCGRSVEELGRRLKRAVSEHQLLHDKGKSIQDLRRRFFLHHLIAEIHTAEIRATSEVSPNSKPAPNTKNHPVRFGSDDEGKYLTQETNKVETYKEQPLKTPGKKKKGKPG.

The N-terminal stretch at 1 to 14 (VGVFLLSYSVPSCG) is a signal peptide. Positions 15-24 (RSVEELGRRL) are excised as a propeptide. An important for receptor binding region spans residues 47 to 58 (RFFLHHLIAEIH). The interval 61 to 121 (EIRATSEVSP…PGKKKKGKPG (61 aa)) is disordered. Residues 66–80 (SEVSPNSKPAPNTKN) are compositionally biased toward polar residues. Positions 98 to 119 (TNKVETYKEQPLKTPGKKKKGK) match the Nuclear localization signal motif. Over residues 99 to 108 (NKVETYKEQP) the composition is skewed to basic and acidic residues. A compositionally biased stretch (basic residues) spans 112–121 (PGKKKKGKPG).

This sequence belongs to the parathyroid hormone family. PTHrP interacts with PTH1R (via N-terminal extracellular domain).

It is found in the secreted. The protein resides in the cytoplasm. The protein localises to the nucleus. In terms of biological role, neuroendocrine peptide which is a critical regulator of cellular and organ growth, development, migration, differentiation and survival and of epithelial calcium ion transport. Acts by binding to its receptor, PTH1R, activating G protein-coupled receptor signaling. Regulates endochondral bone development and epithelial-mesenchymal interactions during the formation of the mammary glands and teeth. Required for skeletal homeostasis. Promotes mammary mesenchyme differentiation and bud outgrowth by modulating mesenchymal cell responsiveness to BMPs. Up-regulates BMPR1A expression in the mammary mesenchyme and this increases the sensitivity of these cells to BMPs and allows them to respond to BMP4 in a paracrine and/or autocrine fashion. BMP4 signaling in the mesenchyme, in turn, triggers epithelial outgrowth and augments MSX2 expression, which causes the mammary mesenchyme to inhibit hair follicle formation within the nipple sheath. The chain is Parathyroid hormone-related protein (PTHLH) from Ovis aries (Sheep).